We begin with the raw amino-acid sequence, 152 residues long: Deoxyuridine 5'-triphosphate nucleotidohydrolase (152 aa).

Substrate-binding positions include 72 to 74 (RSG), Asn-85, and 89 to 91 (TID).

The protein belongs to the dUTPase family. Mg(2+) is required as a cofactor.

It carries out the reaction dUTP + H2O = dUMP + diphosphate + H(+). Its pathway is pyrimidine metabolism; dUMP biosynthesis; dUMP from dCTP (dUTP route): step 2/2. Its function is as follows. This enzyme is involved in nucleotide metabolism: it produces dUMP, the immediate precursor of thymidine nucleotides and it decreases the intracellular concentration of dUTP so that uracil cannot be incorporated into DNA. This Rhodopseudomonas palustris (strain ATCC BAA-98 / CGA009) protein is Deoxyuridine 5'-triphosphate nucleotidohydrolase.